Consider the following 142-residue polypeptide: Large ribosomal subunit protein uL11 (142 aa).

Belongs to the universal ribosomal protein uL11 family. As to quaternary structure, part of the ribosomal stalk of the 50S ribosomal subunit. Interacts with L10 and the large rRNA to form the base of the stalk. L10 forms an elongated spine to which L12 dimers bind in a sequential fashion forming a multimeric L10(L12)X complex. Post-translationally, one or more lysine residues are methylated.

In terms of biological role, forms part of the ribosomal stalk which helps the ribosome interact with GTP-bound translation factors. In Afipia carboxidovorans (strain ATCC 49405 / DSM 1227 / KCTC 32145 / OM5) (Oligotropha carboxidovorans), this protein is Large ribosomal subunit protein uL11.